Consider the following 319-residue polypeptide: L-galactose dehydrogenase (319 aa).

Tyr-59 serves as the catalytic Proton donor. An SIS domain is found at 122–269 (HCHDIEFGSL…ANKEISSVLV (148 aa)). His-124 provides a ligand contact to substrate.

This sequence belongs to the aldo/keto reductase family.

It carries out the reaction L-galactose + NAD(+) = L-galactono-1,4-lactone + NADH + H(+). Catalyzes the oxidation of L-galactose to L-galactono-1,4-lactone in the presence of NAD(+). Uses NAD(+) as a hydrogen acceptor much more efficiently than NADP(+). This chain is L-galactose dehydrogenase (LGALDH), found in Arabidopsis thaliana (Mouse-ear cress).